The sequence spans 304 residues: tRNA pseudouridine synthase B (304 aa).

Aspartate 40 serves as the catalytic Nucleophile.

It belongs to the pseudouridine synthase TruB family. Type 1 subfamily.

It carries out the reaction uridine(55) in tRNA = pseudouridine(55) in tRNA. In terms of biological role, responsible for synthesis of pseudouridine from uracil-55 in the psi GC loop of transfer RNAs. In Halalkalibacterium halodurans (strain ATCC BAA-125 / DSM 18197 / FERM 7344 / JCM 9153 / C-125) (Bacillus halodurans), this protein is tRNA pseudouridine synthase B.